We begin with the raw amino-acid sequence, 280 residues long: 2-dehydro-3-deoxyphosphooctonate aldolase (280 aa).

This sequence belongs to the KdsA family.

The protein localises to the cytoplasm. It catalyses the reaction D-arabinose 5-phosphate + phosphoenolpyruvate + H2O = 3-deoxy-alpha-D-manno-2-octulosonate-8-phosphate + phosphate. It participates in carbohydrate biosynthesis; 3-deoxy-D-manno-octulosonate biosynthesis; 3-deoxy-D-manno-octulosonate from D-ribulose 5-phosphate: step 2/3. The protein operates within bacterial outer membrane biogenesis; lipopolysaccharide biosynthesis. The chain is 2-dehydro-3-deoxyphosphooctonate aldolase from Coxiella burnetii (strain Dugway 5J108-111).